The following is a 303-amino-acid chain: Tyrosine recombinase XerC (303 aa).

Positions 6 to 92 (ASLAPQVEAF…ALRSFLNWLV (87 aa)) constitute a Core-binding (CB) domain. The 180-residue stretch at 113-292 (HLPKNIDVDE…DFQHLATVYD (180 aa)) folds into the Tyr recombinase domain. Catalysis depends on residues arginine 152, lysine 176, histidine 244, arginine 247, and histidine 270. Tyrosine 279 acts as the O-(3'-phospho-DNA)-tyrosine intermediate in catalysis.

The protein belongs to the 'phage' integrase family. XerC subfamily. As to quaternary structure, forms a cyclic heterotetrameric complex composed of two molecules of XerC and two molecules of XerD, in which XerC interacts with XerD via its C-terminal region, XerD interacts with XerC via its C-terminal region and so on.

It localises to the cytoplasm. FtsK may regulate the catalytic switch between XerC and XerD in the heterotetrameric complex during the two steps of the recombination process. Its function is as follows. Site-specific tyrosine recombinase, which acts by catalyzing the cutting and rejoining of the recombining DNA molecules. Binds cooperatively to specific DNA consensus sequences that are separated from XerD binding sites by a short central region, forming the heterotetrameric XerC-XerD complex that recombines DNA substrates. The complex is essential to convert dimers of the bacterial chromosome into monomers to permit their segregation at cell division. It also contributes to the segregational stability of plasmids. In the complex XerC specifically exchanges the top DNA strands. The chain is Tyrosine recombinase XerC from Yersinia pestis.